The sequence spans 62 residues: Phylloseptin-Az7 (62 aa).

A signal peptide spans 1 to 19 (LKKSLFLVLFLGLVSLSIC). Positions 20-40 (EEEKRETEEKENEQEDDKSEE) are excised as a propeptide. Position 61 is a phenylalanine amide (F61).

This sequence belongs to the frog skin active peptide (FSAP) family. Phylloseptin subfamily. In terms of tissue distribution, expressed by the skin glands.

Its subcellular location is the secreted. Its function is as follows. Has antimicrobial activity. The protein is Phylloseptin-Az7 (psn15) of Pithecopus azureus (Orange-legged monkey tree frog).